Here is a 622-residue protein sequence, read N- to C-terminus: uncharacterized protein (622 aa).

The N-terminal stretch at 1–20 (MKIKAVAIFLSLLMIISLFS) is a signal peptide.

This is an uncharacterized protein from Methanocaldococcus jannaschii (strain ATCC 43067 / DSM 2661 / JAL-1 / JCM 10045 / NBRC 100440) (Methanococcus jannaschii).